Consider the following 413-residue polypeptide: S-adenosylmethionine synthase (413 aa).

H15 contributes to the ATP binding site. Residue D17 participates in Mg(2+) binding. E43 lines the K(+) pocket. L-methionine-binding residues include E56 and Q100. A flexible loop region spans residues 100-110 (QSPDISQGVND). ATP contacts are provided by residues 171-173 (DGK), 248-249 (KF), D257, 263-264 (RK), A280, and K284. D257 contacts L-methionine. L-methionine is bound at residue K288.

Belongs to the AdoMet synthase family. In terms of assembly, homotetramer; dimer of dimers. The cofactor is Mg(2+). K(+) serves as cofactor.

The protein localises to the cytoplasm. The catalysed reaction is L-methionine + ATP + H2O = S-adenosyl-L-methionine + phosphate + diphosphate. Its pathway is amino-acid biosynthesis; S-adenosyl-L-methionine biosynthesis; S-adenosyl-L-methionine from L-methionine: step 1/1. In terms of biological role, catalyzes the formation of S-adenosylmethionine (AdoMet) from methionine and ATP. The overall synthetic reaction is composed of two sequential steps, AdoMet formation and the subsequent tripolyphosphate hydrolysis which occurs prior to release of AdoMet from the enzyme. This Prochlorococcus marinus (strain MIT 9301) protein is S-adenosylmethionine synthase.